A 659-amino-acid chain; its full sequence is Sodium/nucleoside cotransporter 2 (659 aa).

Basic and acidic residues predominate over residues 1–10 (MAKSEGRKSA). The tract at residues 1–22 (MAKSEGRKSASQDTSENGMENP) is disordered. Ser-46 bears the Phosphoserine mark. Transmembrane regions (helical) follow at residues 81–101 (ILLG…CILN), 105–124 (ALAL…CHFL), 149–167 (KRVF…LALD), 173–193 (EQLI…ACSK), 201–221 (RTVF…IRTE), 234–254 (IQIF…DTLV), 261–281 (QSLP…YLGL), 296–315 (TMGT…FVGM), 337–356 (VMTG…FISF), 363–382 (LISA…KLVY), 424–444 (VAAN…TLSW), 455–475 (TFQV…GVQW), 530–550 (ATFS…LGGL), and 568–588 (ALFT…ILYV).

Belongs to the concentrative nucleoside transporter (CNT) (TC 2.A.41) family. In terms of tissue distribution, expressed in liver (in bile canalicular membrane vesicles (CMV) but not in sinusoidal vesicles), jejunum, spleen and heart. Also expressed in brain and skeletal muscle. Not expressed in kidney, muscle and lung.

It is found in the membrane. The protein resides in the apicolateral cell membrane. The enzyme catalyses adenosine(out) + Na(+)(out) = adenosine(in) + Na(+)(in). The catalysed reaction is inosine(out) + Na(+)(out) = inosine(in) + Na(+)(in). It catalyses the reaction guanosine(out) + Na(+)(out) = guanosine(in) + Na(+)(in). It carries out the reaction uridine(out) + Na(+)(out) = uridine(in) + Na(+)(in). Inhibited by formycin B, partially inhibited by purine analog ara-A. Functionally, sodium-dependent and purine-selective. Exhibits the transport characteristics of the nucleoside transport system cif or N1 subtype (N1/cif) (selective for purine nucleosides and uridine). Accepts purine, analogs of purine nucleosides and uridine, and exhibits high affinity for adenosine. May contribute to regulate the transport of organic compounds in testes across the blood-testis-barrier. The chain is Sodium/nucleoside cotransporter 2 (Slc28a2) from Rattus norvegicus (Rat).